The following is a 300-amino-acid chain: Pantothenate synthetase (300 aa).

An ATP-binding site is contributed by 30–37 (MGYLHEGH). The Proton donor role is filled by H37. Residue Q61 participates in (R)-pantoate binding. Q61 contacts beta-alanine. An ATP-binding site is contributed by 147 to 150 (GMKD). Q153 serves as a coordination point for (R)-pantoate. Residues V176 and 184 to 187 (KSSR) contribute to the ATP site.

Belongs to the pantothenate synthetase family. In terms of assembly, homodimer.

Its subcellular location is the cytoplasm. The catalysed reaction is (R)-pantoate + beta-alanine + ATP = (R)-pantothenate + AMP + diphosphate + H(+). It functions in the pathway cofactor biosynthesis; (R)-pantothenate biosynthesis; (R)-pantothenate from (R)-pantoate and beta-alanine: step 1/1. Catalyzes the condensation of pantoate with beta-alanine in an ATP-dependent reaction via a pantoyl-adenylate intermediate. The chain is Pantothenate synthetase from Geobacillus kaustophilus (strain HTA426).